Here is a 212-residue protein sequence, read N- to C-terminus: Placenta-specific protein 1 (212 aa).

The signal sequence occupies residues Met1 to Gly22.

The protein belongs to the PLAC1 family. As to expression, expressed in placenta. Localizes primarily to differentiated syncytiotrophoblast throughout gestation as well as to a small population of villous cytotrophoblasts. Also detected in maternal blood and rapidly disappears following delivery, but is not detected in other adult or fetal tissues examined.

It is found in the secreted. Functionally, may play a role in placental development. This Homo sapiens (Human) protein is Placenta-specific protein 1.